Reading from the N-terminus, the 378-residue chain is Erythronate-4-phosphate dehydrogenase (378 aa).

Positions 45 and 66 each coordinate substrate. Residues D146 and T175 each contribute to the NAD(+) site. R208 is a catalytic residue. D232 serves as a coordination point for NAD(+). E237 is a catalytic residue. H254 functions as the Proton donor in the catalytic mechanism. Position 257 (G257) interacts with NAD(+). Y258 provides a ligand contact to substrate.

This sequence belongs to the D-isomer specific 2-hydroxyacid dehydrogenase family. PdxB subfamily. As to quaternary structure, homodimer.

The protein resides in the cytoplasm. The catalysed reaction is 4-phospho-D-erythronate + NAD(+) = (R)-3-hydroxy-2-oxo-4-phosphooxybutanoate + NADH + H(+). It participates in cofactor biosynthesis; pyridoxine 5'-phosphate biosynthesis; pyridoxine 5'-phosphate from D-erythrose 4-phosphate: step 2/5. In terms of biological role, catalyzes the oxidation of erythronate-4-phosphate to 3-hydroxy-2-oxo-4-phosphonooxybutanoate. This chain is Erythronate-4-phosphate dehydrogenase, found in Salmonella dublin (strain CT_02021853).